We begin with the raw amino-acid sequence, 332 residues long: GTP 3',8-cyclase (332 aa).

One can recognise a Radical SAM core domain in the interval 9 to 220 (RFARKVDYLR…DQVRERIAER (212 aa)). Arginine 18 is a GTP binding site. Residues cysteine 25 and cysteine 29 each contribute to the [4Fe-4S] cluster site. Tyrosine 31 provides a ligand contact to S-adenosyl-L-methionine. Cysteine 32 contacts [4Fe-4S] cluster. Residue arginine 67 participates in GTP binding. Residue glycine 71 coordinates S-adenosyl-L-methionine. Threonine 98 lines the GTP pocket. Position 122 (serine 122) interacts with S-adenosyl-L-methionine. Lysine 159 lines the GTP pocket. Methionine 193 lines the S-adenosyl-L-methionine pocket. Positions 258 and 261 each coordinate [4Fe-4S] cluster. Residue 263–265 (RVR) participates in GTP binding. Cysteine 275 lines the [4Fe-4S] cluster pocket.

It belongs to the radical SAM superfamily. MoaA family. Monomer and homodimer. Requires [4Fe-4S] cluster as cofactor.

The catalysed reaction is GTP + AH2 + S-adenosyl-L-methionine = (8S)-3',8-cyclo-7,8-dihydroguanosine 5'-triphosphate + 5'-deoxyadenosine + L-methionine + A + H(+). It functions in the pathway cofactor biosynthesis; molybdopterin biosynthesis. Its function is as follows. Catalyzes the cyclization of GTP to (8S)-3',8-cyclo-7,8-dihydroguanosine 5'-triphosphate. This Pseudomonas savastanoi pv. phaseolicola (strain 1448A / Race 6) (Pseudomonas syringae pv. phaseolicola (strain 1448A / Race 6)) protein is GTP 3',8-cyclase.